An 814-amino-acid chain; its full sequence is Acyl-coenzyme A dehydrogenase (814 aa).

Residue Glu497 is the Proton acceptor of the active site.

It belongs to the acyl-CoA dehydrogenase family. FAD serves as cofactor.

The enzyme catalyses a medium-chain 2,3-saturated fatty acyl-CoA + oxidized [electron-transfer flavoprotein] + H(+) = a medium-chain (2E)-enoyl-CoA + reduced [electron-transfer flavoprotein]. The catalysed reaction is a long-chain 2,3-saturated fatty acyl-CoA + oxidized [electron-transfer flavoprotein] + H(+) = a long-chain (2E)-enoyl-CoA + reduced [electron-transfer flavoprotein]. The protein operates within lipid metabolism; fatty acid beta-oxidation. Functionally, catalyzes the dehydrogenation of acyl-coenzymes A (acyl-CoAs) to 2-enoyl-CoAs, the first step of the beta-oxidation cycle of fatty acid degradation. Is required for E.coli to utilize dodecanoate or oleate as the sole carbon and energy source for growth. The polypeptide is Acyl-coenzyme A dehydrogenase (Escherichia coli (strain K12)).